A 330-amino-acid polypeptide reads, in one-letter code: Flotillin-like protein FloA (330 aa).

2 consecutive transmembrane segments (helical) span residues 5 to 25 and 28 to 48; these read IILPIIIIAAVLIALAILFTF and VALWISALAAGVKISIFTLIG.

It belongs to the flotillin-like FloA family. Homooligomerizes.

It localises to the cell membrane. The protein resides in the membrane raft. Its function is as follows. Found in functional membrane microdomains (FMM) that may be equivalent to eukaryotic membrane rafts. FMMs are highly dynamic and increase in number as cells age. Flotillins are thought to be important factors in membrane fluidity. The polypeptide is Flotillin-like protein FloA (Oceanobacillus iheyensis (strain DSM 14371 / CIP 107618 / JCM 11309 / KCTC 3954 / HTE831)).